The sequence spans 672 residues: MNNKYLLTTALAYTNGPLHLGHARSTYIPADIIKRYLKLKGNDVIHVGGTDNHGVPITLTAEKEGVKPEDIVNKYHNEIKRDLDNLSVEFDSYGKTHSDTHIQNAQEFYKKLKENGYIYEKEIEQFYCPDCDKFLADRYVEGSCPFCEGEARGDHCEVCGRHLEPTELVNPYCVICNATPQLKKTTHYFFKLSALSDNLDNYVKNSNMPDHIKNMAYSWIRELHDWDISRGIKWGVPIPDDENQVMYVWLEAPIGYISFTKMMGDIWKEYWLKNNDNNTENQNTKIWHFIGKDITVHHAVFWPGMLLGHGEYNLPNSIFSGGYLTLEGKKMSTSKKWVVWVDDFIKYFDSDYLRYFLMANAPLNRDCDFSFDEFQKRINTELIAIIANFTHRALVFSHRKFGALPVIDKPEEELNKEDLALLDKCSETIEKYNKNMMDCNLKDALVDIIHLAKEGNNYFQKMEPWTVDDENRLKQIMFVCGVITKHIAYLLYPFMPNKTNELLDLMNEEMDLEIRGNELKKPIVVFSKIENDTIKMVKEKLLKSENSKNTKNKKKNTKKNKNGEKMELIGIDDFAKIELKVAQILEAEEVPKSKKLLKLIVDIGDEKRQVVAGIKGHYTPEELIGKKIVLVCNLKPAKLCGVESQGMVLAAGDEEVALLSPEKDLPVGSTIC.

Residues 12 to 22 (AYTNGPLHLGH) carry the 'HIGH' region motif. 4 residues coordinate Zn(2+): Cys144, Cys147, Cys156, and Cys159. The 'KMSKS' region signature appears at 330–334 (KMSTS). An ATP-binding site is contributed by Thr333. Residues 573–672 (DFAKIELKVA…KDLPVGSTIC (100 aa)) form the tRNA-binding domain.

The protein belongs to the class-I aminoacyl-tRNA synthetase family. MetG type 1 subfamily. In terms of assembly, homodimer. Zn(2+) serves as cofactor.

Its subcellular location is the cytoplasm. It catalyses the reaction tRNA(Met) + L-methionine + ATP = L-methionyl-tRNA(Met) + AMP + diphosphate. Functionally, is required not only for elongation of protein synthesis but also for the initiation of all mRNA translation through initiator tRNA(fMet) aminoacylation. This is Methionine--tRNA ligase from Methanococcus aeolicus (strain ATCC BAA-1280 / DSM 17508 / OCM 812 / Nankai-3).